The following is a 365-amino-acid chain: Chorismate synthase (365 aa).

Arginine 46 is a binding site for NADP(+). FMN-binding positions include 124–126, glycine 284, 299–303, and arginine 326; these read RAS and KPTPS.

This sequence belongs to the chorismate synthase family. FMNH2 serves as cofactor.

It carries out the reaction 5-O-(1-carboxyvinyl)-3-phosphoshikimate = chorismate + phosphate. It participates in metabolic intermediate biosynthesis; chorismate biosynthesis; chorismate from D-erythrose 4-phosphate and phosphoenolpyruvate: step 7/7. Its function is as follows. Catalyzes the anti-1,4-elimination of the C-3 phosphate and the C-6 proR hydrogen from 5-enolpyruvylshikimate-3-phosphate (EPSP) to yield chorismate, which is the branch point compound that serves as the starting substrate for the three terminal pathways of aromatic amino acid biosynthesis. This reaction introduces a second double bond into the aromatic ring system. The chain is Chorismate synthase from Pyrobaculum islandicum (strain DSM 4184 / JCM 9189 / GEO3).